Reading from the N-terminus, the 274-residue chain is Bis(5'-nucleosyl)-tetraphosphatase, symmetrical (274 aa).

Belongs to the Ap4A hydrolase family.

It carries out the reaction P(1),P(4)-bis(5'-adenosyl) tetraphosphate + H2O = 2 ADP + 2 H(+). Functionally, hydrolyzes diadenosine 5',5'''-P1,P4-tetraphosphate to yield ADP. The chain is Bis(5'-nucleosyl)-tetraphosphatase, symmetrical from Shewanella baltica (strain OS223).